We begin with the raw amino-acid sequence, 507 residues long: Alkyl hydroperoxide reductase subunit F (507 aa).

207 to 222 provides a ligand contact to FAD; that stretch reads DVLIVGGGPASGSAAI. Cys-335 and Cys-338 are disulfide-bonded. NAD(+) is bound at residue 347–361; that stretch reads DVAVIGGGNSGVEAA. Position 467-477 (467-477) interacts with FAD; that stretch reads TNVPGIFAAGD.

Belongs to the class-II pyridine nucleotide-disulfide oxidoreductase family. Homodimer. FAD serves as cofactor.

Serves to protect the cell against DNA damage by alkyl hydroperoxides. It can use either NADH or NADPH as electron donor for direct reduction of redox dyes or of alkyl hydroperoxides when combined with the AhpC protein. The protein is Alkyl hydroperoxide reductase subunit F (ahpF) of Staphylococcus aureus (strain MSSA476).